The primary structure comprises 432 residues: Adenylosuccinate synthetase (432 aa).

GTP-binding positions include 13–19 (GDEGKGK) and 41–43 (GHT). Catalysis depends on Asp14, which acts as the Proton acceptor. Mg(2+) contacts are provided by Asp14 and Gly41. IMP is bound by residues 14-17 (DEGK), 39-42 (NAGH), Thr130, Arg144, Gln225, Thr240, and Arg304. Catalysis depends on His42, which acts as the Proton donor. 300–306 (AVTGRPR) provides a ligand contact to substrate. GTP-binding positions include Arg306, 332–334 (KLD), and 415–417 (STG).

The protein belongs to the adenylosuccinate synthetase family. In terms of assembly, homodimer. The cofactor is Mg(2+).

It localises to the cytoplasm. It catalyses the reaction IMP + L-aspartate + GTP = N(6)-(1,2-dicarboxyethyl)-AMP + GDP + phosphate + 2 H(+). The protein operates within purine metabolism; AMP biosynthesis via de novo pathway; AMP from IMP: step 1/2. Plays an important role in the de novo pathway of purine nucleotide biosynthesis. Catalyzes the first committed step in the biosynthesis of AMP from IMP. This Haemophilus influenzae (strain PittGG) protein is Adenylosuccinate synthetase.